Reading from the N-terminus, the 230-residue chain is Phosphoenolpyruvate guanylyltransferase (230 aa).

3 residues coordinate phosphoenolpyruvate: Thr139, Gly155, and Ser158.

Belongs to the CofC family.

It carries out the reaction phosphoenolpyruvate + GTP + H(+) = enolpyruvoyl-2-diphospho-5'-guanosine + diphosphate. It functions in the pathway cofactor biosynthesis; coenzyme F420 biosynthesis. Functionally, guanylyltransferase that catalyzes the activation of phosphoenolpyruvate (PEP) as enolpyruvoyl-2-diphospho-5'-guanosine, via the condensation of PEP with GTP. It is involved in the biosynthesis of coenzyme F420, a hydride carrier cofactor. The chain is Phosphoenolpyruvate guanylyltransferase from Thermobaculum terrenum (strain ATCC BAA-798 / CCMEE 7001 / YNP1).